Reading from the N-terminus, the 236-residue chain is UPF0502 protein Bpro_3844 (236 aa).

The protein belongs to the UPF0502 family.

The polypeptide is UPF0502 protein Bpro_3844 (Polaromonas sp. (strain JS666 / ATCC BAA-500)).